Consider the following 136-residue polypeptide: MSLIKEFKAFASRGNVIDMAVGIIIGAAFGKIVSSFVADIIMPPIGIILGGVNFSDLSIVLQAAQGDAPAVVIAYGKFIQTIIDFTIIAFAIFMGLKAINSLKRKQEEAPKAPPAPTKDQELLSEIRDLLKAQQEK.

2 helical membrane-spanning segments follow: residues 9 to 29 and 79 to 99; these read AFASRGNVIDMAVGIIIGAAF and IQTIIDFTIIAFAIFMGLKAI.

It belongs to the MscL family. In terms of assembly, homopentamer.

Its subcellular location is the cell inner membrane. Functionally, channel that opens in response to stretch forces in the membrane lipid bilayer. May participate in the regulation of osmotic pressure changes within the cell. The chain is Large-conductance mechanosensitive channel from Shewanella sp. (strain ANA-3).